The primary structure comprises 290 residues: 4-hydroxy-tetrahydrodipicolinate synthase (290 aa).

Thr-42 lines the pyruvate pocket. Tyr-129 serves as the catalytic Proton donor/acceptor. Lys-157 (schiff-base intermediate with substrate) is an active-site residue. Ile-198 contacts pyruvate.

The protein belongs to the DapA family. In terms of assembly, homotetramer; dimer of dimers.

It localises to the cytoplasm. The catalysed reaction is L-aspartate 4-semialdehyde + pyruvate = (2S,4S)-4-hydroxy-2,3,4,5-tetrahydrodipicolinate + H2O + H(+). It functions in the pathway amino-acid biosynthesis; L-lysine biosynthesis via DAP pathway; (S)-tetrahydrodipicolinate from L-aspartate: step 3/4. Catalyzes the condensation of (S)-aspartate-beta-semialdehyde [(S)-ASA] and pyruvate to 4-hydroxy-tetrahydrodipicolinate (HTPA). This Chlamydia felis (strain Fe/C-56) (Chlamydophila felis) protein is 4-hydroxy-tetrahydrodipicolinate synthase.